The chain runs to 714 residues: Polynucleotide 5'-hydroxyl-kinase NOL9 (714 aa).

A2 carries the N-acetylalanine modification. The short motif at 31–47 is the Nucleolar localization signal element; sequence RRGRRRFGVLTRVELRR. The tract at residues 80-133 is disordered; the sequence is ARSRPAPRSPPTPSVPPAPCTASATCSLLNPRNHSTPQSRAGRPVRKVSPNVTQ. A compositionally biased stretch (pro residues) spans 86 to 98; the sequence is PRSPPTPSVPPAP. The segment covering 107–118 has biased composition (polar residues); sequence LLNPRNHSTPQS. A Phosphoserine modification is found at S128. An ATP-binding site is contributed by 322 to 329; sequence GACDIGKS. The interval 495-714 is interaction with LAS1L; that stretch reads FTYEEKESSP…PRHKLRQRRK (220 aa). K500 is covalently cross-linked (Glycyl lysine isopeptide (Lys-Gly) (interchain with G-Cter in SUMO2)). S502 is modified (phosphoserine).

It belongs to the Clp1 family. NOL9/GRC3 subfamily. Interacts with PELP1, WDR18 and SENP3. Interacts with LAS1L to form an ITS2 pre-rRNA endonuclease-kinase complex.

It is found in the nucleus. The protein localises to the nucleolus. It carries out the reaction a 5'-end dephospho-2'-deoxyribonucleoside-DNA + ATP = a 5'-end 5'-phospho-2'-deoxyribonucleoside-DNA + ADP + H(+). The catalysed reaction is a 5'-end dephospho-ribonucleoside-RNA + ATP = a 5'-end 5'-phospho-ribonucleoside-RNA + ADP + H(+). Its function is as follows. Polynucleotide kinase that can phosphorylate the 5'-hydroxyl groups of single-stranded and double-stranded RNA and DNA substrates. Involved in rRNA processing and its kinase activity is required for the processing of the 32S precursor into 5.8S and 28S rRNAs, more specifically for the generation of the major 5.8S(S) form. Required for the efficient pre-rRNA processing of internal transcribed spacer 2 (ITS2). Associates with LAS1L to form an ITS2 pre-rRNA endonuclease-kinase complex and is responsible for the transport of this complex into the nucleolus. The chain is Polynucleotide 5'-hydroxyl-kinase NOL9 from Mus musculus (Mouse).